Here is a 307-residue protein sequence, read N- to C-terminus: Reaction center protein M chain (307 aa).

3 helical membrane-spanning segments follow: residues 52 to 78, 110 to 139, and 142 to 167; these read LGIA…WYQA, QGGV…ADQL, and GKHM…PILM. (7R,8Z)-bacteriochlorophyll b contacts are provided by histidine 181 and histidine 201. Residues 197–225 form a helical membrane-spanning segment; it reads YNPFHGLSIAALYGSALLFAMHGATILAV. Residues histidine 218 and glutamate 233 each coordinate Fe cation. Residue tryptophan 251 participates in a ubiquinone binding. The chain crosses the membrane as a helical span at residues 259 to 285; the sequence is ATMEGIHRWAIWMAVMVTLTGGIGILL. Residue histidine 265 participates in Fe cation binding.

Belongs to the reaction center PufL/M/PsbA/D family. Reaction center is composed of four bacteriochlorophylls, two bacteriopheophytins, two ubiquinones, one iron, and three highly hydrophobic polypeptide chains (designated L, M, and H).

The protein localises to the cellular chromatophore membrane. The reaction center is a membrane-bound complex that mediates the initial photochemical event in the electron transfer process of photosynthesis. The sequence is that of Reaction center protein M chain (pufM) from Rhodobacter capsulatus (Rhodopseudomonas capsulata).